Consider the following 433-residue polypeptide: MGLTSKLEKLKLKELTGHEAAVKSNVVNGADTDDTDDIDEMDNEGQSILMGIIAQLRPGMDLSRITLPTFILEKKSMLERITNFFQIPDMLLKANRTSDDVERFVSVLAWYLASWHIAPKAVKKPLNPVLGETFNCYWENISDDCSAYYISEQVSHHPPKSSYFYLVPEAKIKVDGILIPKSRFLGNSSAAMMEGWAHLTLGEHENEVYEMNQPNVYCRGILFGKMKMELGDHMYVKCRKTGLEADIDFKTKGFISGTYDAIEGVIKNSKTSEVLYQITGKWNEVMEIKDLKTGKKRVLVDTKSSVPVKPRVRPLEEQGQYESRKLWKPTIDALARRDHTVATEEKFAVEDEQRNLAKKRIDDGVEFHPKFFRPVNEKEVELQDLEYVIYKKFDLKSNPEVLTDEVLSIAPILPGQKHDEKFEIPAFKKHEET.

This sequence belongs to the OSBP family.

The chain is Oxysterol-binding protein-like protein OBPa (OBPA) from Candida albicans (strain SC5314 / ATCC MYA-2876) (Yeast).